Here is a 232-residue protein sequence, read N- to C-terminus: Octanoyltransferase (232 aa).

Positions 44–219 (EHTADEVWVV…QLARQFGLVL (176 aa)) constitute a BPL/LPL catalytic domain. Substrate-binding positions include 83–90 (RGGQVTYH), 150–152 (ALG), and 163–165 (GLS). Cys-181 serves as the catalytic Acyl-thioester intermediate.

This sequence belongs to the LipB family.

The protein resides in the cytoplasm. The catalysed reaction is octanoyl-[ACP] + L-lysyl-[protein] = N(6)-octanoyl-L-lysyl-[protein] + holo-[ACP] + H(+). It participates in protein modification; protein lipoylation via endogenous pathway; protein N(6)-(lipoyl)lysine from octanoyl-[acyl-carrier-protein]: step 1/2. In terms of biological role, catalyzes the transfer of endogenously produced octanoic acid from octanoyl-acyl-carrier-protein onto the lipoyl domains of lipoate-dependent enzymes. Lipoyl-ACP can also act as a substrate although octanoyl-ACP is likely to be the physiological substrate. The sequence is that of Octanoyltransferase from Xanthomonas euvesicatoria pv. vesicatoria (strain 85-10) (Xanthomonas campestris pv. vesicatoria).